The chain runs to 230 residues: Cytidylate kinase (230 aa).

Residue Gly12–Thr20 coordinates ATP.

This sequence belongs to the cytidylate kinase family. Type 1 subfamily.

The protein resides in the cytoplasm. The catalysed reaction is CMP + ATP = CDP + ADP. It carries out the reaction dCMP + ATP = dCDP + ADP. The sequence is that of Cytidylate kinase from Shewanella baltica (strain OS223).